The sequence spans 779 residues: Phosphoribosylformylglycinamidine synthase subunit PurL (779 aa).

Residue His-52 is part of the active site. Residues Tyr-55 and Lys-94 each coordinate ATP. Residue Glu-96 participates in Mg(2+) binding. Substrate contacts are provided by residues 97–100 (SHNH) and Arg-119. The active-site Proton acceptor is the His-98. Asp-120 contributes to the Mg(2+) binding site. Residue Gln-243 coordinates substrate. Mg(2+) is bound at residue Asp-271. 315–317 (ESQ) provides a ligand contact to substrate. Residues Asn-523 and Gly-560 each contribute to the ATP site. Asn-561 contacts Mg(2+). Ser-563 lines the substrate pocket.

Belongs to the FGAMS family. In terms of assembly, monomer. Part of the FGAM synthase complex composed of 1 PurL, 1 PurQ and 2 PurS subunits.

It localises to the cytoplasm. The enzyme catalyses N(2)-formyl-N(1)-(5-phospho-beta-D-ribosyl)glycinamide + L-glutamine + ATP + H2O = 2-formamido-N(1)-(5-O-phospho-beta-D-ribosyl)acetamidine + L-glutamate + ADP + phosphate + H(+). Its pathway is purine metabolism; IMP biosynthesis via de novo pathway; 5-amino-1-(5-phospho-D-ribosyl)imidazole from N(2)-formyl-N(1)-(5-phospho-D-ribosyl)glycinamide: step 1/2. Part of the phosphoribosylformylglycinamidine synthase complex involved in the purines biosynthetic pathway. Catalyzes the ATP-dependent conversion of formylglycinamide ribonucleotide (FGAR) and glutamine to yield formylglycinamidine ribonucleotide (FGAM) and glutamate. The FGAM synthase complex is composed of three subunits. PurQ produces an ammonia molecule by converting glutamine to glutamate. PurL transfers the ammonia molecule to FGAR to form FGAM in an ATP-dependent manner. PurS interacts with PurQ and PurL and is thought to assist in the transfer of the ammonia molecule from PurQ to PurL. This chain is Phosphoribosylformylglycinamidine synthase subunit PurL, found in Prochlorococcus marinus (strain AS9601).